A 291-amino-acid chain; its full sequence is ATP synthase gamma chain (291 aa).

This sequence belongs to the ATPase gamma chain family. F-type ATPases have 2 components, CF(1) - the catalytic core - and CF(0) - the membrane proton channel. CF(1) has five subunits: alpha(3), beta(3), gamma(1), delta(1), epsilon(1). CF(0) has three main subunits: a, b and c.

Its subcellular location is the cell inner membrane. Produces ATP from ADP in the presence of a proton gradient across the membrane. The gamma chain is believed to be important in regulating ATPase activity and the flow of protons through the CF(0) complex. The sequence is that of ATP synthase gamma chain from Burkholderia ambifaria (strain MC40-6).